Here is a 746-residue protein sequence, read N- to C-terminus: Tudor domain-containing protein krimp (746 aa).

The tract at residues 1–310 (MNLEDISMIM…RDIYNQILKD (310 aa)) is involved in homooligomerization. The segment at 311–489 (MAAFPENTIV…PAGITEDDMA (179 aa)) is non-canonical tudor domain. The segment at 511–540 (KDEQRICRHYDPKLNGCFKGNNCRFAHEPF) adopts a C3H1-type zinc-finger fold. Residues 613–670 (KPRLLDIVLALYSDGCFYRAQIIDEFPSEYMIFYVDYGNTEFVPLSCLAPCENVDSFK) enclose the Tudor domain.

This sequence belongs to the Tudor domain containing protein family. In terms of assembly, homooligomerizes (via N-terminus). Component of the ping-pong piRNA processing (4P) complex consisting of krimp, aub and AGO3; a single molecule of krimp can bind both aub and AGO3 without the need for homooligomerization. Interacts (via canonical tudor domain) with aub (via N-terminus when symmetrically dimethylated on arginine residues). Interacts (via non-canonical tudor domain) with AGO3 (via N-terminus when unmethylated on arginine residues); this interaction leads to symmetrical dimethylation on AGO3 arginine residues and its subsequent dissociation from krimp. Krimp associated AGO3 is mostly free of piRNA binding and the interaction plays an important role in the loading of AGO3 with piRNAs; piRNA binding stimulates methylation of ACO3 by the csul/PRMT5 methylosome complex and promotes dissociation of the two proteins. In terms of tissue distribution, widely expressed in female germline cells, including differentiating germ cells in germarium and egg chambers (at protein level).

It is found in the cytoplasm. It localises to the perinuclear region. The protein localises to the cytoplasmic ribonucleoprotein granule. Stable structural component of the perinuclear meiotic nuage, a germline-specific subcellular membraneless ribonucleoprotein compartment involved in production of transposable element-repressing Piwi-interacting RNA (piRNA)-induced silencing complexes (piRISCs), which are essential for maintaining germline integrity during oogenesis. Scaffold component of the ping-pong piRNA processing (4P) complex that recruits the Piwi proteins aub and AGO3 to specific subregions of the nuage where it coordinates their activity in the ping-pong amplification step of secondary piRNA biogenesis. Binds methylated aub, which is associated with piRNA, and unmethylated AGO3, which is not associated with piRNA, bringing the Piwi proteins into close proximity and facilitating the loading of freshly cut piRNAs generated by aub onto AGO3. Promotes asymmetric ping-pong amplification by aub and AGO3 to bias production towards antisense piRNAs capable of silencing transposable elements. Required for symmetrical dimethylation of AGO3, probably by recruitment to the nuage where methylosome components are located; dimethylation promotes AGO3 dissociation and interaction with other tudor-domain containing proteins such as tud. Required for the recruitment of mael to the perinuclear meiotic nuage. Required for the recruitment of aub to the nuage in testes but not in ovaries. Involved in repression of long interspersed nuclear elements (LINEs) including HeT-A, I-element LINEs and possibly mst40, but not TART LINEs. The chain is Tudor domain-containing protein krimp from Drosophila melanogaster (Fruit fly).